The primary structure comprises 206 residues: dCTP deaminase, dUMP-forming (206 aa).

DCTP contacts are provided by residues 117 to 122, aspartate 135, 143 to 145, glutamine 163, tyrosine 177, lysine 184, and glutamine 188; these read RSSFGR and TLE. The active-site Proton donor/acceptor is the glutamate 145.

Belongs to the dCTP deaminase family. In terms of assembly, homotrimer.

The catalysed reaction is dCTP + 2 H2O = dUMP + NH4(+) + diphosphate. Its pathway is pyrimidine metabolism; dUMP biosynthesis; dUMP from dCTP: step 1/1. Bifunctional enzyme that catalyzes both the deamination of dCTP to dUTP and the hydrolysis of dUTP to dUMP without releasing the toxic dUTP intermediate. The protein is dCTP deaminase, dUMP-forming of Methanococcus maripaludis (strain C5 / ATCC BAA-1333).